The sequence spans 183 residues: Potassium-transporting ATPase KdpC subunit (183 aa).

Residues 10–30 (ASLLVLSLVTGVAYPLLVTGI) form a helical membrane-spanning segment.

This sequence belongs to the KdpC family. In terms of assembly, the system is composed of three essential subunits: KdpA, KdpB and KdpC.

It localises to the cell inner membrane. In terms of biological role, part of the high-affinity ATP-driven potassium transport (or Kdp) system, which catalyzes the hydrolysis of ATP coupled with the electrogenic transport of potassium into the cytoplasm. This subunit acts as a catalytic chaperone that increases the ATP-binding affinity of the ATP-hydrolyzing subunit KdpB by the formation of a transient KdpB/KdpC/ATP ternary complex. The polypeptide is Potassium-transporting ATPase KdpC subunit (Pseudomonas aeruginosa (strain ATCC 15692 / DSM 22644 / CIP 104116 / JCM 14847 / LMG 12228 / 1C / PRS 101 / PAO1)).